A 467-amino-acid chain; its full sequence is MQRWVLHIDMDAFFASCEQLTRPTLRGRPVLVGGVSGRGVVAGASYEARKFGARSAMPMHQAKARVGFGAVVVTPRHIVYSAASRRVFQIVEKRAGIVERLSIDEGFMEPEALVGATPEEVKQWAEELRAEIKEVTGLPSSVGAGSGKQIAKIGSGEAKPDGVFVVPVDKQHDLLDPLPVGALWGVGPVTGSKLASMGVETIGDLAALTQKEVEISLGATIGISLWNLARGIDDRPVEPRAEAKQISQEHTYEKDLLTRQQVDAAIIRSAEGAHRRLLKDGRGARTVSVKLRMADFRIESRSYTLSYATDDYATLEATAFRLARYPGEVGPIRLVGVSFSGLEESRQDILFPELDQQIIVPPAPDTDYEVGVQSSSSSESTQVEAPQDVALSMWRATQDVYHPEYGHGWVQGAGHGVVSVRFETRSTTKGRTKSFSMDDPDLTPADPLDSLDWADWFAENGETGDDE.

The 183-residue stretch at 5-187 (VLHIDMDAFF…LPVGALWGVG (183 aa)) folds into the UmuC domain. Mg(2+) contacts are provided by D9 and D104. E105 is an active-site residue. 2 disordered regions span residues 364–386 (PDTD…VEAP) and 428–449 (TKGR…DPLD).

This sequence belongs to the DNA polymerase type-Y family. Monomer. Mg(2+) serves as cofactor.

It is found in the cytoplasm. The catalysed reaction is DNA(n) + a 2'-deoxyribonucleoside 5'-triphosphate = DNA(n+1) + diphosphate. Its function is as follows. Poorly processive, error-prone DNA polymerase involved in untargeted mutagenesis. Copies undamaged DNA at stalled replication forks, which arise in vivo from mismatched or misaligned primer ends. These misaligned primers can be extended by PolIV. Exhibits no 3'-5' exonuclease (proofreading) activity. May be involved in translesional synthesis, in conjunction with the beta clamp from PolIII. This is DNA polymerase IV from Corynebacterium glutamicum (strain R).